We begin with the raw amino-acid sequence, 432 residues long: MGKNVVILGTQWGDEGKGKVVDLLTEDVAAVVRFQGGHNAGHTLVIDGKKTVLHLIPSGILREGVQCIIGNGVVLSPAALKAEVLELLEQGVPAVDRLKISAACPLILPYHIAIDQARELARGEKKIGTTGRGIGPAYEDKVARRAIRVGDLLDSERFASKLKEVLEYYNFVLTQYHKVEPISFDEVYTAGLEMAEFLRPMVADTITLLHDLRKAGANIMFEGAQGSLLDVDHGTYPYVTSSNTTAGGAPAGTGFGPLYLDYVLGITKAYTTRVGSGPFPTELFDEDGERLGRRGHEFGATTGRSRRCGWFDSVALRHAVQINSVSGICLTKLDVLDGSSVIKVCVSYADENGNPVAGSLVDSEGYEKARPVYVELPGWTESTVGAENFEALPKNAQDYIRFLEEQVGVPVDIISTGPDRNETIVIRDPFKQ.

Residues 13–19 (GDEGKGK) and 41–43 (GHT) each bind GTP. The Proton acceptor role is filled by Asp14. 2 residues coordinate Mg(2+): Asp14 and Gly41. IMP is bound by residues 14 to 17 (DEGK), 39 to 42 (NAGH), Thr130, Arg144, Gln225, Thr240, and Arg304. His42 acts as the Proton donor in catalysis. Substrate is bound at residue 300-306 (ATTGRSR). GTP contacts are provided by residues Arg306, 332-334 (KLD), and 415-417 (STG).

This sequence belongs to the adenylosuccinate synthetase family. In terms of assembly, homodimer. The cofactor is Mg(2+).

It is found in the cytoplasm. It catalyses the reaction IMP + L-aspartate + GTP = N(6)-(1,2-dicarboxyethyl)-AMP + GDP + phosphate + 2 H(+). It functions in the pathway purine metabolism; AMP biosynthesis via de novo pathway; AMP from IMP: step 1/2. Functionally, plays an important role in the de novo pathway of purine nucleotide biosynthesis. Catalyzes the first committed step in the biosynthesis of AMP from IMP. The protein is Adenylosuccinate synthetase of Marinomonas sp. (strain MWYL1).